The following is a 232-amino-acid chain: Orotate phosphoribosyltransferase (232 aa).

Residues Arg107, Lys108, Lys111, and 133–141 (EDLTTDGGS) each bind 5-phospho-alpha-D-ribose 1-diphosphate. An orotate-binding site is contributed by Thr137.

Belongs to the purine/pyrimidine phosphoribosyltransferase family. PyrE subfamily. As to quaternary structure, homodimer. Mg(2+) serves as cofactor.

The enzyme catalyses orotidine 5'-phosphate + diphosphate = orotate + 5-phospho-alpha-D-ribose 1-diphosphate. The protein operates within pyrimidine metabolism; UMP biosynthesis via de novo pathway; UMP from orotate: step 1/2. In terms of biological role, catalyzes the transfer of a ribosyl phosphate group from 5-phosphoribose 1-diphosphate to orotate, leading to the formation of orotidine monophosphate (OMP). The sequence is that of Orotate phosphoribosyltransferase from Cereibacter sphaeroides (strain ATCC 17029 / ATH 2.4.9) (Rhodobacter sphaeroides).